The chain runs to 492 residues: Target of Myb1 membrane trafficking protein (492 aa).

Methionine 1 carries the N-acetylmethionine modification. Position 11 is a phosphoserine (serine 11). Positions 20-152 (ATDGSLQSED…DLRRKGLEFP (133 aa)) constitute a VHS domain. Positions 48–56 (KDAFRAVKK) match the KRKK motif. The residue at position 160 (serine 160) is a Phosphoserine. At threonine 164 the chain carries Phosphothreonine. Over residues 167-195 (RTVFNSETPSRQNSVSSNTSQRGDLSQHA) the composition is skewed to polar residues. Residues 167-215 (RTVFNSETPSRQNSVSSNTSQRGDLSQHATPLPTPAVLPGDSPITPTPE) are disordered. 3 positions are modified to phosphoserine: serine 176, serine 180, and serine 208. A GAT domain is found at 215–303 (EQIGKLRSEL…VFLRHERFER (89 aa)). A clathrin box region spans residues 321 to 326 (DLIDMG). Phosphoserine occurs at positions 355 and 376. A Glycyl lysine isopeptide (Lys-Gly) (interchain with G-Cter in SUMO2) cross-link involves residue lysine 385. Residues 392–463 (TDGLAGALDA…ADRLPNLASP (72 aa)) are interaction with MYO6. The tract at residues 450–492 (RAKAADRLPNLASPSAEGPPRPSPGTAPRRKTQEKDDDMLFAL) is disordered. Serine 462 carries the phosphoserine modification.

The protein belongs to the TOM1 family. In terms of assembly, found in a complex with TOLLIP; interacts (via GAT domain) with TOLLIP (via N-terminus); the interactions leads to TOM1-recruitment to endosomes and inhibition of TOLLIP binding to PtdIns(3)P. Interacts (via GAT domain and the C-terminal part of the VHS domain) with UBC/ubiquitin. Interacts (via clathrin box and C-terminus) with clathrin heavy chain. Interacts with MYO6. Interacts with TAX1BP1; CALCOCO2/NDP52 and OPTN; the interaction is indirect and is mediated by MYO6, which acts as a bridge between TOM1 and the three autophagy receptors. Interacts (via C-terminus) with ZFYVE16 (via C-terminus); interaction is required to target TOM1 and clathrin to endosomes. Interacts with LRBA. Monoubiquitinated. In terms of tissue distribution, ubiquitous. In adult brain, it is highly expressed at the mesencephalic level, in the hippocampal formation and medial lemniscus. In cerebellum, it is highly expressed in Purkinje cells and granular layers.

It is found in the cytoplasm. The protein localises to the endosome membrane. It localises to the early endosome membrane. Functionally, adapter protein that plays a role in the intracellular membrane trafficking of ubiquitinated proteins, thereby participating in autophagy, ubiquitination-dependent signaling and receptor recycling pathways. Acts as a MYO6/Myosin VI adapter protein that targets MYO6 to endocytic structures. Together with MYO6, required for autophagosomal delivery of endocytic cargo, the maturation of autophagosomes and their fusion with lysosomes. MYO6 links TOM1 with autophagy receptors, such as TAX1BP1; CALCOCO2/NDP52 and OPTN. Binds to polyubiquitinated proteins via its GAT domain. In a complex with TOLLIP, recruits ubiquitin-conjugated proteins onto early endosomes. The Tom1-Tollip complex may regulate endosomal trafficking by linking polyubiquitinated proteins to clathrin. Mediates clathrin recruitment to early endosomes by ZFYVE16. Modulates binding of TOLLIP to phosphatidylinositol 3-phosphate (PtdIns(3)P) via binding competition; the association with TOLLIP may favor the release of TOLLIP from endosomal membranes, allowing TOLLIP to commit to cargo trafficking. Acts as a phosphatidylinositol 5-phosphate (PtdIns(5)P) effector by binding to PtdIns(5)P, thereby regulating endosomal maturation. PtdIns(5)P-dependent recruitment to signaling endosomes may block endosomal maturation. Also inhibits Toll-like receptor (TLR) signaling and participates in immune receptor recycling. This is Target of Myb1 membrane trafficking protein from Mus musculus (Mouse).